The sequence spans 466 residues: UDP-N-acetylmuramate--L-alanine ligase (466 aa).

114–120 (GTHGKTT) contacts ATP.

Belongs to the MurCDEF family.

The protein localises to the cytoplasm. The enzyme catalyses UDP-N-acetyl-alpha-D-muramate + L-alanine + ATP = UDP-N-acetyl-alpha-D-muramoyl-L-alanine + ADP + phosphate + H(+). Its pathway is cell wall biogenesis; peptidoglycan biosynthesis. Functionally, cell wall formation. This chain is UDP-N-acetylmuramate--L-alanine ligase, found in Mesorhizobium japonicum (strain LMG 29417 / CECT 9101 / MAFF 303099) (Mesorhizobium loti (strain MAFF 303099)).